We begin with the raw amino-acid sequence, 607 residues long: Ceramide kinase (607 aa).

Residues 135-358 (DRPKSLMVFV…LDIAQVVRWK (224 aa)) form the DAGKc domain. ATP contacts are provided by residues 145 to 149 (HPLCG), T176, and 205 to 211 (GDGLFNE). Substrate is bound at residue 204–207 (GGDG). The Proton donor/acceptor role is filled by D206. The tract at residues 247 to 297 (NDLSNSELTGDDANAISGSSNTPDDHEPLLSTTRSTGLDISSSDSSDEPCN) is disordered. The span at 276–286 (LSTTRSTGLDI) shows a compositional bias: polar residues. S320 contributes to the ATP binding site. Positions 454 to 461 (CRTNCLIC) match the CXXXCXXC motif.

It depends on Ca(2+) as a cofactor. Mg(2+) serves as cofactor. In terms of tissue distribution, highly expressed in leaves and at lower levels in stems.

The catalysed reaction is an N-acylsphing-4-enine + ATP = an N-acylsphing-4-enine 1-phosphate + ADP + H(+). In terms of biological role, catalyzes specifically the phosphorylation of ceramide to form ceramide 1-phosphate. Possesses activity on ceramide analog (C6 synthetic ceramide) in vitro. Ceramide is a critical sphingolipid metabolite that induces programmed cell death (PCD) in plants and ceramide-1-phosphate has a PCD suppressive effect. Thus, ceramide phosphorylation plays a role in the modulation of PCD and CERK activity is crucial for the maintenance of cell viability. This chain is Ceramide kinase (CERK), found in Oryza sativa subsp. japonica (Rice).